Consider the following 630-residue polypeptide: 1-deoxy-D-xylulose-5-phosphate synthase (630 aa).

Thiamine diphosphate is bound by residues His72 and 113–115 (GHS). Asp144 contributes to the Mg(2+) binding site. Thiamine diphosphate-binding positions include 145–146 (GA), Asn173, Tyr284, and Glu367. Asn173 serves as a coordination point for Mg(2+).

Belongs to the transketolase family. DXPS subfamily. Homodimer. Mg(2+) serves as cofactor. Thiamine diphosphate is required as a cofactor.

The catalysed reaction is D-glyceraldehyde 3-phosphate + pyruvate + H(+) = 1-deoxy-D-xylulose 5-phosphate + CO2. The protein operates within metabolic intermediate biosynthesis; 1-deoxy-D-xylulose 5-phosphate biosynthesis; 1-deoxy-D-xylulose 5-phosphate from D-glyceraldehyde 3-phosphate and pyruvate: step 1/1. Catalyzes the acyloin condensation reaction between C atoms 2 and 3 of pyruvate and glyceraldehyde 3-phosphate to yield 1-deoxy-D-xylulose-5-phosphate (DXP). The sequence is that of 1-deoxy-D-xylulose-5-phosphate synthase from Bacillus cereus (strain B4264).